The primary structure comprises 1035 residues: GRB10-interacting GYF protein 1 (1035 aa).

A phosphoserine mark is found at serine 24, serine 28, serine 137, and serine 157. A disordered region spans residues 105–422 (KGAGPPLAGT…AGPPGDLEDD (318 aa)). 2 stretches are compositionally biased toward basic and acidic residues: residues 148 to 179 (SPREIQRSQSWDDRGERRFEKSARRDGARCGF) and 186 to 203 (PRKEHARSDSENWRSLRE). Phosphoserine is present on serine 230. Over residues 239-267 (GWREHGERRRKFEFDLRGDRGGCGEEEGR) the composition is skewed to basic and acidic residues. 2 stretches are compositionally biased toward acidic residues: residues 295–304 (CLDDEDEEMG) and 324–349 (PEEQELDFQGLEEEEEPSEGLEEEGP). Position 341 is a phosphoserine (serine 341). Over residues 367–378 (SSPSPLPTLGPL) the composition is skewed to low complexity. Positions 388–401 (TAEKEPPAAEDDIR) are enriched in basic and acidic residues. Serine 406 is modified (phosphoserine). Low complexity predominate over residues 406–417 (SPGVGSSAGPPG). In terms of domain architecture, GYF spans 474–522 (ARKWFYKDPQGEIQGPFTTQEMAEWFQAGYFSMSLLVKRGCDEGFQPLG). Residues serine 538 and serine 638 each carry the phosphoserine modification. Disordered stretches follow at residues 621–640 (PPRGGDQNLLPTMSRSLSVP), 696–724 (KREEEERKRREEKRRQQQQEEQKRRQEEE), and 825–879 (WGGP…RPIR). Over residues 629 to 639 (LLPTMSRSLSV) the composition is skewed to polar residues. The span at 696 to 722 (KREEEERKRREEKRRQQQQEEQKRRQE) shows a compositional bias: basic and acidic residues. The span at 857–874 (LKNSRSSPSLSDSYSHLS) shows a compositional bias: low complexity. Serine 862 carries the phosphoserine modification.

This sequence belongs to the GIGYF family. In terms of assembly, interacts with GRB10. This transient binding is increased under IGF1 stimulation and leads to recruitment of GIGYF1/GRB10 complex to IGF1 receptor. Interacts with DDX6.

Functionally, may act cooperatively with GRB10 to regulate tyrosine kinase receptor signaling. May increase IGF1 receptor phosphorylation under IGF1 stimulation as well as phosphorylation of IRS1 and SHC1. The sequence is that of GRB10-interacting GYF protein 1 (GIGYF1) from Homo sapiens (Human).